The chain runs to 130 residues: DNA-directed RNA polymerase subunit omega (130 aa).

The tract at residues 110-130 (EELLKGLEGLAPPEEQPEEDE) is disordered.

This sequence belongs to the RNA polymerase subunit omega family. The RNAP catalytic core consists of 2 alpha, 1 beta, 1 beta' and 1 omega subunit. When a sigma factor is associated with the core the holoenzyme is formed, which can initiate transcription.

The enzyme catalyses RNA(n) + a ribonucleoside 5'-triphosphate = RNA(n+1) + diphosphate. In terms of biological role, promotes RNA polymerase assembly. Latches the N- and C-terminal regions of the beta' subunit thereby facilitating its interaction with the beta and alpha subunits. The chain is DNA-directed RNA polymerase subunit omega from Bradyrhizobium sp. (strain BTAi1 / ATCC BAA-1182).